The following is an 85-amino-acid chain: RNA-binding protein Hfq (85 aa).

The 60-residue stretch at 9 to 68 (DPFLNALRRERIPVSIYLVNGIKLQGQIESFDQFVVLLKNTVSQMVYKHAISTVVPARIP) folds into the Sm domain.

Belongs to the Hfq family. In terms of assembly, homohexamer.

In terms of biological role, RNA chaperone that binds small regulatory RNA (sRNAs) and mRNAs to facilitate mRNA translational regulation in response to envelope stress, environmental stress and changes in metabolite concentrations. Also binds with high specificity to tRNAs. This Idiomarina loihiensis (strain ATCC BAA-735 / DSM 15497 / L2-TR) protein is RNA-binding protein Hfq.